Reading from the N-terminus, the 430-residue chain is DNA polymerase IV 1 (430 aa).

Residues 45 to 225 form the UmuC domain; sequence LAHIDCDAFY…KPVTLIWGVG (181 aa). The Mg(2+) site is built by D49 and D142. The active site involves E143.

It belongs to the DNA polymerase type-Y family. In terms of assembly, monomer. Mg(2+) serves as cofactor.

The protein resides in the cytoplasm. It carries out the reaction DNA(n) + a 2'-deoxyribonucleoside 5'-triphosphate = DNA(n+1) + diphosphate. Poorly processive, error-prone DNA polymerase involved in untargeted mutagenesis. Copies undamaged DNA at stalled replication forks, which arise in vivo from mismatched or misaligned primer ends. These misaligned primers can be extended by PolIV. Exhibits no 3'-5' exonuclease (proofreading) activity. May be involved in translesional synthesis, in conjunction with the beta clamp from PolIII. In Rhizobium meliloti (strain 1021) (Ensifer meliloti), this protein is DNA polymerase IV 1 (dinB1).